The chain runs to 494 residues: NADH-ubiquinone oxidoreductase chain 4 (494 aa).

Helical transmembrane passes span 6-26, 41-61, 87-107, 118-138, 141-161, 172-192, 207-227, 246-266, 280-300, 302-322, 336-356, 375-395, 415-435, and 460-480; these read IMIYLFSLLLIPLIVYFLLIY, TIGLTTLIINLILSMIIFILF, IDGISIYFLLLTTMIMPISLV, VLSFVIIILLLETLLLAVFLV, ILLFYIFFESILPPLFLLIGL, FYLFLYTLLGSLFMLLSIITM, ANFSYITQLFLFYGIFISFAV, PLAGSVILAGIVWKLRWYGIF, YTYIVYVIGVITIFYTSFSTL, TIAIKELIAYSSVSHAAVYLL, IALGLAHGFVSSGLFICVGGI, LMPIFCILFLYITLGNCGSPL, VLGVLASTSIVFSAAYTIFMF, and FILLISLVVPAVFFGIYPAVI.

This sequence belongs to the complex I subunit 4 family.

It localises to the mitochondrion membrane. It carries out the reaction a ubiquinone + NADH + 5 H(+)(in) = a ubiquinol + NAD(+) + 4 H(+)(out). Core subunit of the mitochondrial membrane respiratory chain NADH dehydrogenase (Complex I) that is believed to belong to the minimal assembly required for catalysis. Complex I functions in the transfer of electrons from NADH to the respiratory chain. The immediate electron acceptor for the enzyme is believed to be ubiquinone. This is NADH-ubiquinone oxidoreductase chain 4 (ND4) from Trichophyton rubrum (Athlete's foot fungus).